We begin with the raw amino-acid sequence, 448 residues long: Phosphoglucosamine mutase (448 aa).

The active-site Phosphoserine intermediate is Ser100. Residues Ser100, Asp240, Asp242, and Asp244 each contribute to the Mg(2+) site. Position 100 is a phosphoserine (Ser100).

The protein belongs to the phosphohexose mutase family. Requires Mg(2+) as cofactor. Activated by phosphorylation.

The catalysed reaction is alpha-D-glucosamine 1-phosphate = D-glucosamine 6-phosphate. Functionally, catalyzes the conversion of glucosamine-6-phosphate to glucosamine-1-phosphate. This is Phosphoglucosamine mutase from Clostridium beijerinckii (strain ATCC 51743 / NCIMB 8052) (Clostridium acetobutylicum).